The primary structure comprises 323 residues: tRNA U34 carboxymethyltransferase (323 aa).

Carboxy-S-adenosyl-L-methionine-binding positions include Lys93, Trp107, Lys112, Gly132, 154 to 156, 182 to 183, Met197, Tyr201, and Arg316; these read DPS and VE.

This sequence belongs to the class I-like SAM-binding methyltransferase superfamily. CmoB family. In terms of assembly, homotetramer.

The enzyme catalyses carboxy-S-adenosyl-L-methionine + 5-hydroxyuridine(34) in tRNA = 5-carboxymethoxyuridine(34) in tRNA + S-adenosyl-L-homocysteine + H(+). In terms of biological role, catalyzes carboxymethyl transfer from carboxy-S-adenosyl-L-methionine (Cx-SAM) to 5-hydroxyuridine (ho5U) to form 5-carboxymethoxyuridine (cmo5U) at position 34 in tRNAs. This chain is tRNA U34 carboxymethyltransferase, found in Pseudoalteromonas atlantica (strain T6c / ATCC BAA-1087).